The chain runs to 122 residues: Large ribosomal subunit protein uL14 (122 aa).

It belongs to the universal ribosomal protein uL14 family. Part of the 50S ribosomal subunit. Forms a cluster with proteins L3 and L19. In the 70S ribosome, L14 and L19 interact and together make contacts with the 16S rRNA in bridges B5 and B8.

Functionally, binds to 23S rRNA. Forms part of two intersubunit bridges in the 70S ribosome. This is Large ribosomal subunit protein uL14 from Magnetococcus marinus (strain ATCC BAA-1437 / JCM 17883 / MC-1).